A 398-amino-acid chain; its full sequence is Enoyl-[acyl-carrier-protein] reductase [NADH] (398 aa).

NAD(+)-binding positions include 48–53 (GSSTGY), 74–75 (FE), 111–112 (DA), and 139–140 (LA). Residue Tyr225 coordinates substrate. Residue Tyr235 is the Proton donor of the active site. NAD(+)-binding positions include Lys244 and 273–275 (VVT).

The protein belongs to the TER reductase family. As to quaternary structure, monomer.

The enzyme catalyses a 2,3-saturated acyl-[ACP] + NAD(+) = a (2E)-enoyl-[ACP] + NADH + H(+). Its pathway is lipid metabolism; fatty acid biosynthesis. Functionally, involved in the final reduction of the elongation cycle of fatty acid synthesis (FAS II). Catalyzes the reduction of a carbon-carbon double bond in an enoyl moiety that is covalently linked to an acyl carrier protein (ACP). In Pseudomonas aeruginosa (strain UCBPP-PA14), this protein is Enoyl-[acyl-carrier-protein] reductase [NADH].